We begin with the raw amino-acid sequence, 147 residues long: Small ribosomal subunit protein uS12 (147 aa).

The protein belongs to the universal ribosomal protein uS12 family. As to quaternary structure, part of the 30S ribosomal subunit.

Functionally, with S4 and S5 plays an important role in translational accuracy. Located at the interface of the 30S and 50S subunits. This chain is Small ribosomal subunit protein uS12, found in Pyrobaculum calidifontis (strain DSM 21063 / JCM 11548 / VA1).